The primary structure comprises 107 residues: Nucleoid-associated protein RBE_0048 (107 aa).

The protein belongs to the YbaB/EbfC family. As to quaternary structure, homodimer.

It is found in the cytoplasm. The protein resides in the nucleoid. In terms of biological role, binds to DNA and alters its conformation. May be involved in regulation of gene expression, nucleoid organization and DNA protection. This Rickettsia bellii (strain RML369-C) protein is Nucleoid-associated protein RBE_0048.